A 195-amino-acid polypeptide reads, in one-letter code: Replication restart protein PriC (195 aa).

The protein belongs to the PriC family. As to quaternary structure, monomer. Component of the replication restart primosome, which is composed of PriA, PriB, PriC, DnaB and DnaT; DnaG primase associates transiently with this complex. Interacts with the C-terminus of SSB; this interaction is required to load the main replicative helicase onto substrate replication forks. Interacts with helicase DnaB alone and in the DnaB-DnaC complex, probably 1:1 binding with DnaB.

Functionally, involved in the restart of stalled replication forks, which reloads the DnaB replicative helicase on sites other than the origin of replication. Recognizes abandoned replication forks and remodels DNA single-stranded binding protein (SSB) on ssDNA to uncover a loading site for DnaB. There are several restart pathways, the PriA-PriC pathway is a minor restart pathway. Part of the minor PriC-Rep pathway for restart of stalled replication forks, which has a different substrate specificity than PriA. Part of the major restart pathway with PriA, PriB, DnaB, DnaT and DnaG primase. priB and priC have redundant roles in the cell. The protein is Replication restart protein PriC of Haemophilus influenzae (strain ATCC 51907 / DSM 11121 / KW20 / Rd).